The primary structure comprises 147 residues: MSMSTSTEVIAHHWAFAIFLIVAIGLCCLMLVGGWFLGGRARARSKNVPFESGIDSVGSARLRLSAKFYLVAMFFVIFDVEALYLFAWSTSIRESGWVGFVEAAIFIFVLLAGLVYLVRIGALDWTPARSRRERMNPETNSIANRQR.

Transmembrane regions (helical) follow at residues 16-36 (FAIFLIVAIGLCCLMLVGGWF), 68-88 (FYLVAMFFVIFDVEALYLFAW), and 98-118 (VGFVEAAIFIFVLLAGLVYLV).

It belongs to the complex I subunit 3 family. NDH-1 is composed of 13 different subunits. Subunits NuoA, H, J, K, L, M, N constitute the membrane sector of the complex.

It localises to the cell inner membrane. It catalyses the reaction a quinone + NADH + 5 H(+)(in) = a quinol + NAD(+) + 4 H(+)(out). Functionally, NDH-1 shuttles electrons from NADH, via FMN and iron-sulfur (Fe-S) centers, to quinones in the respiratory chain. The immediate electron acceptor for the enzyme in this species is believed to be ubiquinone. Couples the redox reaction to proton translocation (for every two electrons transferred, four hydrogen ions are translocated across the cytoplasmic membrane), and thus conserves the redox energy in a proton gradient. This chain is NADH-quinone oxidoreductase subunit A, found in Shigella boydii serotype 18 (strain CDC 3083-94 / BS512).